The chain runs to 1125 residues: Speract receptor (1125 aa).

The N-terminal stretch at 1–21 (MAHARHLFLFMVAFTITMVIA) is a signal peptide. Residues 22-510 (RLDFNPTIIN…GELCTNWALY (489 aa)) lie on the Extracellular side of the membrane. N-linked (GlcNAc...) asparagine glycosylation is found at Asn-185 and Asn-409. Residues 511–531 (LGASIPTFLIIFGGLIGFFIY) form a helical membrane-spanning segment. Residues 532 to 1125 (RKRAYEAALD…AANRVIPDDV (594 aa)) are Cytoplasmic-facing. In terms of domain architecture, Protein kinase spans 571–839 (MSAISVISNA…PNIMAVRTML (269 aa)). A Guanylate cyclase domain is found at 914-1044 (SIFFSDIVGF…DTVNTASRME (131 aa)).

Belongs to the adenylyl cyclase class-4/guanylyl cyclase family.

Its subcellular location is the membrane. It carries out the reaction GTP = 3',5'-cyclic GMP + diphosphate. Functionally, implicated as a cell-surface receptor on spermatozoa for 'speract' a chemotactic peptide, and on various other cells as a receptor for atrial natriuretic peptide. This chain is Speract receptor, found in Strongylocentrotus purpuratus (Purple sea urchin).